The sequence spans 362 residues: NAD(P)H-quinone oxidoreductase subunit 1, chloroplastic (362 aa).

8 helical membrane-spanning segments follow: residues 29–49 (ILPI…IVWL), 103–123 (IAVI…HFVL), 128–148 (IGVF…LMAG), 164–184 (AAQS…ISLL), 202–222 (FFGW…ISSL), 247–267 (YSGI…LVSS), 303–323 (TMGI…SITI), and 342–362 (FLLP…LVSL).

The protein belongs to the complex I subunit 1 family. As to quaternary structure, NDH is composed of at least 16 different subunits, 5 of which are encoded in the nucleus.

It is found in the plastid. The protein localises to the chloroplast thylakoid membrane. It carries out the reaction a plastoquinone + NADH + (n+1) H(+)(in) = a plastoquinol + NAD(+) + n H(+)(out). The catalysed reaction is a plastoquinone + NADPH + (n+1) H(+)(in) = a plastoquinol + NADP(+) + n H(+)(out). Functionally, NDH shuttles electrons from NAD(P)H:plastoquinone, via FMN and iron-sulfur (Fe-S) centers, to quinones in the photosynthetic chain and possibly in a chloroplast respiratory chain. The immediate electron acceptor for the enzyme in this species is believed to be plastoquinone. Couples the redox reaction to proton translocation, and thus conserves the redox energy in a proton gradient. The sequence is that of NAD(P)H-quinone oxidoreductase subunit 1, chloroplastic from Hordeum vulgare (Barley).